The following is a 75-amino-acid chain: Protein Tlp homolog (75 aa).

A disordered region spans residues 53 to 75 (REALDGMREEIKDEARDKKNGYM).

Belongs to the Tlp family.

This chain is Protein Tlp homolog, found in Clostridium botulinum (strain ATCC 19397 / Type A).